A 347-amino-acid polypeptide reads, in one-letter code: Ubiquitin thioesterase Otu1 (347 aa).

Residues Phe5–Ala87 form the Ubiquitin-like domain. The tract at residues Lys8–Ala89 is UBX-like. The OTU domain occupies Leu150–Glu274. The tract at residues Val155–Cys161 is cys-loop. Residue Asp158 is part of the active site. The active-site Nucleophile is the Cys161. The interval Ile213–Ile223 is variable-loop. Residues Phe263–His267 are his-loop. Residue Ile266 coordinates substrate. His267 is a catalytic residue. The segment at Leu290–Gln295 is S2 site. The C2H2-type zinc finger occupies Leu317 to His341. The active site involves His341.

The catalysed reaction is Thiol-dependent hydrolysis of ester, thioester, amide, peptide and isopeptide bonds formed by the C-terminal Gly of ubiquitin (a 76-residue protein attached to proteins as an intracellular targeting signal).. Hydrolase that can remove conjugated ubiquitin from proteins and may therefore play an important regulatory role at the level of protein turnover by preventing degradation. Involved in the regulation of DNA damage repair. This chain is Ubiquitin thioesterase Otu1, found in Drosophila melanogaster (Fruit fly).